The sequence spans 461 residues: Argininosuccinate lyase (461 aa).

This sequence belongs to the lyase 1 family. Argininosuccinate lyase subfamily.

It localises to the cytoplasm. It carries out the reaction 2-(N(omega)-L-arginino)succinate = fumarate + L-arginine. It functions in the pathway amino-acid biosynthesis; L-arginine biosynthesis; L-arginine from L-ornithine and carbamoyl phosphate: step 3/3. This chain is Argininosuccinate lyase, found in Shewanella piezotolerans (strain WP3 / JCM 13877).